Reading from the N-terminus, the 95-residue chain is Small ubiquitin-related modifier 2 (95 aa).

Residue M1 forms a Peptide (Met-Gly) (interchain with G-Cter in ubiquitin) linkage. Residues K5 and K7 each participate in a glycyl lysine isopeptide (Lys-Gly) (interchain with G-Cter in SUMO2) cross-link. K11 bears the N6-acetyllysine; alternate mark. K11 participates in a covalent cross-link: Glycyl lysine isopeptide (Lys-Gly) (interchain with G-Cter in SUMO); alternate. A Glycyl lysine isopeptide (Lys-Gly) (interchain with G-Cter in SUMO1); alternate cross-link involves residue K11. K11 participates in a covalent cross-link: Glycyl lysine isopeptide (Lys-Gly) (interchain with G-Cter in SUMO2); alternate. K11 participates in a covalent cross-link: Glycyl lysine isopeptide (Lys-Gly) (interchain with G-Cter in ubiquitin); alternate. The Ubiquitin-like domain maps to 16 to 95; the sequence is DHINLKVAGQ…VFQQQTGGVY (80 aa). K21 is covalently cross-linked (Glycyl lysine isopeptide (Lys-Gly) (interchain with G-Cter in SUMO2)). Residue G93 forms a Glycyl lysine isopeptide (Gly-Lys) (interchain with K-? in acceptor proteins) linkage. Residues 94–95 constitute a propeptide that is removed on maturation; it reads VY.

The protein belongs to the ubiquitin family. SUMO subfamily. As to quaternary structure, interacts with SAE2 and UBE2I. Interacts with ZNF451. Identified in a complex with ZNF451 and UBE2I/UBC9, where one ZNF451 interacts with one UBE2I/UBC9 and two SUMO2 chains, one bound to the UBE2I/UBC9 active site and the other to another region of the same UBE2I/UBC9 molecule. Covalently attached to a number of proteins. Interacts with PELP1. Interacts with USP25; the interaction sumoylates USP25. Interacts with SIMC1, CASP8AP2, RNF111 and SOBP (via SIM domains). Interacts with MTA1. Interacts with HINT1. Interacts with GCNA (via SIM domains); this interaction allows the GCNA recruitment to DPCs sites. Polymeric chains can be formed through Lys-11 cross-linking. Polymeric SUMO2 chains undergo 'Lys-6'-, 'Lys-11'-, 'Lys-48'- and 'Lys-63'-linked polyubiquitination by RNF4. In terms of processing, cleavage of precursor form by SENP1 or SENP2 is necessary for function. Post-translationally, monoubiquitinated N-terminally by UBE2W, which primes it for RNF4-dependent polyubiquitination by the UBE2V1-UBE2N heterodimer.

The protein localises to the nucleus. Its subcellular location is the PML body. Ubiquitin-like protein that can be covalently attached to proteins as a monomer or as a lysine-linked polymer. Covalent attachment via an isopeptide bond to its substrates requires prior activation by the E1 complex SAE1-SAE2 and linkage to the E2 enzyme UBE2I, and can be promoted by an E3 ligase such as PIAS1-4, RANBP2 or CBX4. This post-translational modification on lysine residues of proteins plays a crucial role in a number of cellular processes such as nuclear transport, DNA replication and repair, mitosis and signal transduction. Polymeric SUMO2 chains are also susceptible to polyubiquitination which functions as a signal for proteasomal degradation of modified proteins. Plays a role in the regulation of sumoylation status of SETX. This Bos taurus (Bovine) protein is Small ubiquitin-related modifier 2.